The chain runs to 196 residues: DnaA initiator-associating protein DiaA (196 aa).

Residues 34–196 (MVQSLLNGNK…DNTLFPHQND (163 aa)) form the SIS domain.

Belongs to the SIS family. DiaA subfamily. In terms of assembly, homotetramer; dimer of dimers.

Required for the timely initiation of chromosomal replication via direct interactions with the DnaA initiator protein. The protein is DnaA initiator-associating protein DiaA of Pectobacterium carotovorum subsp. carotovorum (strain PC1).